The primary structure comprises 128 residues: MITPKGTHDAVAKFQKTDLHQDLDYIVLQQRRTQLETLINERESFVKNLCSLFHKIQNTKNYQEFVDVLAENRDLLREIFTVENGFQKQKWISNDDIPQIDWDKFALDINAYIAENDQLLALYEDGLL.

The protein localises to the cytoplasm. It is found in the nucleus. This Saccharomyces cerevisiae (strain ATCC 204508 / S288c) (Baker's yeast) protein is ADA histone acetyltransferase complex component 2 (AHC2).